The chain runs to 469 residues: Glutamine synthetase (469 aa).

The GS beta-grasp domain occupies 14–98; the sequence is NDVKYVDLRF…ITCDVLEPTT (85 aa). The 364-residue stretch at 106 to 469 folds into the GS catalytic domain; the sequence is PRGIAKKAEA…PVEFDMYYSG (364 aa). Glu131 and Glu133 together coordinate Mg(2+). Residue Glu209 coordinates ATP. The Mg(2+) site is built by Glu214 and Glu221. Residues 265-266 and Gly266 each bind L-glutamate; that span reads NG. Residue His270 coordinates Mg(2+). ATP is bound by residues 272–274 and Ser274; that span reads HQS. Residues Arg322, Glu328, and Arg340 each coordinate L-glutamate. Residues Arg340, Arg345, and Lys353 each contribute to the ATP site. Glu358 is a Mg(2+) binding site. Arg360 contacts L-glutamate. Position 398 is an O-AMP-tyrosine (Tyr398).

The protein belongs to the glutamine synthetase family. In terms of assembly, oligomer of 12 subunits arranged in the form of two hexameric ring. It depends on Mg(2+) as a cofactor.

It localises to the cytoplasm. The catalysed reaction is L-glutamate + NH4(+) + ATP = L-glutamine + ADP + phosphate + H(+). With respect to regulation, the activity of this enzyme could be controlled by adenylation under conditions of abundant glutamine. Catalyzes the ATP-dependent biosynthesis of glutamine from glutamate and ammonia. The chain is Glutamine synthetase from Bradyrhizobium diazoefficiens (strain JCM 10833 / BCRC 13528 / IAM 13628 / NBRC 14792 / USDA 110).